The sequence spans 273 residues: Ribosomal RNA small subunit methyltransferase A (273 aa).

Residues asparagine 18, leucine 20, glycine 45, glutamate 66, aspartate 91, and asparagine 113 each coordinate S-adenosyl-L-methionine.

This sequence belongs to the class I-like SAM-binding methyltransferase superfamily. rRNA adenine N(6)-methyltransferase family. RsmA subfamily.

The protein resides in the cytoplasm. The catalysed reaction is adenosine(1518)/adenosine(1519) in 16S rRNA + 4 S-adenosyl-L-methionine = N(6)-dimethyladenosine(1518)/N(6)-dimethyladenosine(1519) in 16S rRNA + 4 S-adenosyl-L-homocysteine + 4 H(+). Functionally, specifically dimethylates two adjacent adenosines (A1518 and A1519) in the loop of a conserved hairpin near the 3'-end of 16S rRNA in the 30S particle. May play a critical role in biogenesis of 30S subunits. In Klebsiella pneumoniae subsp. pneumoniae (strain ATCC 700721 / MGH 78578), this protein is Ribosomal RNA small subunit methyltransferase A.